The primary structure comprises 273 residues: HMP-PP phosphatase (273 aa).

D8 acts as the Nucleophile in catalysis. D8, D10, and D212 together coordinate Mg(2+).

Belongs to the HAD-like hydrolase superfamily. Cof family. It depends on Mg(2+) as a cofactor.

It catalyses the reaction 4-amino-2-methyl-5-(diphosphooxymethyl)pyrimidine + H2O = 4-amino-2-methyl-5-(phosphooxymethyl)pyrimidine + phosphate + H(+). Functionally, catalyzes the hydrolysis of 4-amino-2-methyl-5-hydroxymethylpyrimidine pyrophosphate (HMP-PP) to 4-amino-2-methyl-5-hydroxymethylpyrimidine phosphate (HMP-P). The polypeptide is HMP-PP phosphatase (Yersinia pseudotuberculosis serotype O:1b (strain IP 31758)).